Reading from the N-terminus, the 480-residue chain is Protein nucleotidyltransferase YdiU (480 aa).

Residues Gly-86, Gly-88, Arg-89, Lys-109, Asp-121, Gly-122, Arg-172, and Arg-179 each contribute to the ATP site. Asp-248 acts as the Proton acceptor in catalysis. Mg(2+)-binding residues include Asn-249 and Asp-258. Asp-258 contacts ATP.

The protein belongs to the SELO family. Mg(2+) serves as cofactor. Mn(2+) is required as a cofactor.

The catalysed reaction is L-seryl-[protein] + ATP = 3-O-(5'-adenylyl)-L-seryl-[protein] + diphosphate. It carries out the reaction L-threonyl-[protein] + ATP = 3-O-(5'-adenylyl)-L-threonyl-[protein] + diphosphate. The enzyme catalyses L-tyrosyl-[protein] + ATP = O-(5'-adenylyl)-L-tyrosyl-[protein] + diphosphate. It catalyses the reaction L-histidyl-[protein] + UTP = N(tele)-(5'-uridylyl)-L-histidyl-[protein] + diphosphate. The catalysed reaction is L-seryl-[protein] + UTP = O-(5'-uridylyl)-L-seryl-[protein] + diphosphate. It carries out the reaction L-tyrosyl-[protein] + UTP = O-(5'-uridylyl)-L-tyrosyl-[protein] + diphosphate. Functionally, nucleotidyltransferase involved in the post-translational modification of proteins. It can catalyze the addition of adenosine monophosphate (AMP) or uridine monophosphate (UMP) to a protein, resulting in modifications known as AMPylation and UMPylation. The chain is Protein nucleotidyltransferase YdiU from Salmonella choleraesuis (strain SC-B67).